A 411-amino-acid chain; its full sequence is Stearoyl-[acyl-carrier-protein] 9-desaturase 2, chloroplastic (411 aa).

The transit peptide at 1–44 directs the protein to the chloroplast; the sequence is MALLLNSTITVAMKQNPLVAVSFPRTTCLGSSFSPPRLLRVSCV. Fe cation is bound by residues Glu148, Glu186, His189, Glu239, Glu272, and His275.

It belongs to the fatty acid desaturase type 2 family. In terms of assembly, homodimer. The cofactor is Fe(2+). In terms of tissue distribution, preferentially expressed in roots and flowers.

It is found in the plastid. Its subcellular location is the chloroplast. The enzyme catalyses octadecanoyl-[ACP] + 2 reduced [2Fe-2S]-[ferredoxin] + O2 + 2 H(+) = (9Z)-octadecenoyl-[ACP] + 2 oxidized [2Fe-2S]-[ferredoxin] + 2 H2O. Its pathway is lipid metabolism; fatty acid metabolism. In terms of biological role, converts stearoyl-ACP to oleoyl-ACP by introduction of a cis double bond between carbons 9 and 10 of the acyl chain. Exhibits delta-9 palmitoyl-[acyl-carrier-protein] desaturase (PAD) activity. Involved in omega-7 monounsaturated fatty acid biosynthesis, especially in the endosperm oil. This Arabidopsis thaliana (Mouse-ear cress) protein is Stearoyl-[acyl-carrier-protein] 9-desaturase 2, chloroplastic (S-ACP-DES2).